Here is a 268-residue protein sequence, read N- to C-terminus: CCAAT/enhancer-binding protein delta (268 aa).

Disordered stretches follow at residues 1-50 (MSAA…STTP), 98-132 (LELLQGGPTRPPGVGSIARGPLKREPDWGDGDAPG), and 152-223 (AAQP…QQKL). Ser-2 carries the N-acetylserine modification. Lys-120 participates in a covalent cross-link: Glycyl lysine isopeptide (Lys-Gly) (interchain with G-Cter in SUMO). Positions 155–173 (PTPPTSPEPPRGSPGPSLA) are enriched in pro residues. Basic and acidic residues predominate over residues 177–201 (VREKGAGKRGPDRGSPEYRQRRERN). In terms of domain architecture, bZIP spans 191–254 (SPEYRQRRER…ASLRQFFKEL (64 aa)). Positions 195 to 222 (RQRRERNNIAVRKSRDKAKRRNQEMQQK) are basic motif. Residues 226–254 (LSAENEKLHQRVEQLTRDLASLRQFFKEL) are leucine-zipper.

It belongs to the bZIP family. C/EBP subfamily. Binds DNA as a homodimer and as a heterodimer. Can form stable heterodimers with CEBPA, CEBPB and CEBPE. Directly interacts with SPI1/PU.1; this interaction does not affect DNA-binding properties of each partner. Interacts with PRDM16. Ubiquitously expressed.

It localises to the nucleus. Its function is as follows. Transcription activator that recognizes two different DNA motifs: the CCAAT homology common to many promoters and the enhanced core homology common to many enhancers. Important transcription factor regulating the expression of genes involved in immune and inflammatory responses. Transcriptional activator that enhances IL6 transcription alone and as heterodimer with CEBPB. The chain is CCAAT/enhancer-binding protein delta (Cebpd) from Rattus norvegicus (Rat).